Reading from the N-terminus, the 124-residue chain is Orexigenic neuropeptide QRFP (124 aa).

The signal sequence occupies residues 1–17; it reads MRCLCSWLCLLLPLSAC. The propeptide occupies 18-79; that stretch reads FPLLDRRGPT…REHTGFRLGR (62 aa). Positions 63 to 100 are disordered; it reads KEQQASRREHTGFRLGRQDSGSEATGFLPTDSEKASGP. Gln-80 carries the post-translational modification Pyrrolidone carboxylic acid. Phe-122 is modified (phenylalanine amide).

It belongs to the RFamide neuropeptide family. As to quaternary structure, ligand for the G-protein coupled receptor QRFPR/GPR103. Expressed in the brain with highest expression levels in the hypothalamus and optic nerve. Also expressed in the trachea and mammary gland.

The protein localises to the secreted. In terms of biological role, stimulates feeding and grooming behavior, metabolic rate and locomotor activity and increases blood pressure. May have orexigenic activity. May promote aldosterone secretion by the adrenal gland. The chain is Orexigenic neuropeptide QRFP (Qrfp) from Rattus norvegicus (Rat).